Here is a 977-residue protein sequence, read N- to C-terminus: MAADSVQNDARGPMVSGRLDFDQNLDFSDTMVQKNLDEIKDQIKREIRKELKIKEGAENLRKVTTDKKSLAYVDNMLKKSNKKVEELHQELQELNAHIVVKDPEEVEEYPLTPDTPKSETRMSTNSNRLAALKKQADIELKVKQGAEDMIQMYSNGSSKDRKLLAAAQQMLQDSKTKIEFIRMQILKASQTSEINYENNDVTTSKPIISPLDLRIEELRHHYRIESAVADGAKNVMKLLGTGKVTEKKAHSEAQARLNESSQKLDLLKFSLEQRLSELPKNHPKGTLIMEELAMVASPPNSPRQSIMSTSNQYSTVAKPAALTGTLDVRLMGCQDLLENVPGRSKTASVSLPGWSPSEARSSFMSRGNKNKSGSSRTLSKSDDLSNEISAVLKLDNTVVGQTHWKPVSNQSWDQKFTLELDRSRELEIAVYWRDWRSLCAVKFLRLEDFLDNQRHGMCLYLEPQGTLFAEVTFFNPVIERRPKLQRQKKIFSKQQGKTFLRAPQMNINIATWGRLVRRAIPSVNTSFSPQAADLGSAMSHETAPMGHPDAHSLPSDPTVTKLDFDKAVTPPSKRNSIEVEIEETAPPDKISDGKEVQDALATFDFLNNTVAKPDYDSLVEHEQPGLELTEIQRKTEIREEEEVQFSLSDFKCVAVLGRGHFGKVLLADYKTTGEMFAIKALKKGDIVARDEVDSLMCEKRIFETVNSVRHPFLVNLFACFQTKEHVCFVMEYAAGGDLMMHIHADVFSETRSVFYAACVVLGLQFLHDHKIVYRDLKLDNLLLDTEGYVKIADFGLCKEGMGFKDRTSTFCGTPEFLAPEVLTETSYTRAVDWWGLGVLIFEMLVGESPFPGDDEEEVFDSIVNDEVRYPKYLSTEAISIMRRLLRRNPERRLGAGERDAEEVKRHPFFRDMDWPGLLAKKIRPPFVPTITSREDVSNFDDEFTSEAPILTPPREPRILTLGEQDLFADFDYIADWC.

3 REM-1 domains span residues 24–100 (NLDF…HIVV), 114–194 (DTPK…TSEI), and 200–280 (DVTT…ELPK). Positions 298–468 (PPNSPRQSIM…LYLEPQGTLF (171 aa)) constitute a C2 domain. Disordered stretches follow at residues 342-381 (GRSK…LSKS) and 531-576 (AADL…KRNS). A compositionally biased stretch (polar residues) spans 358 to 378 (EARSSFMSRGNKNKSGSSRTL). Residues 650–909 (FKCVAVLGRG…AEEVKRHPFF (260 aa)) enclose the Protein kinase domain. Residues 656-664 (LGRGHFGKV) and Lys-679 contribute to the ATP site. The Proton acceptor role is filled by Asp-775. In terms of domain architecture, AGC-kinase C-terminal spans 910 to 977 (RDMDWPGLLA…ADFDYIADWC (68 aa)).

It belongs to the protein kinase superfamily. AGC Ser/Thr protein kinase family. PKC subfamily. In terms of processing, autophosphorylated. Phosphorylated. Proteolytically cleaved.

It localises to the cytoplasm. The protein resides in the nucleus. The protein localises to the membrane. It is found in the cell projection. Its subcellular location is the lamellipodium. It localises to the cytoskeleton. The protein resides in the cleavage furrow. The protein localises to the midbody. It is found in the cell junction. It carries out the reaction L-seryl-[protein] + ATP = O-phospho-L-seryl-[protein] + ADP + H(+). The catalysed reaction is L-threonyl-[protein] + ATP = O-phospho-L-threonyl-[protein] + ADP + H(+). With respect to regulation, kinase activity is activated upon binding to GTP-bound Rho/Rac GTPases. Activated by lipids, particularly cardiolipin and to a lesser extent by other acidic phospholipids and unsaturated fatty acids. Two specific sites, Thr-809 (activation loop of the kinase domain) and Thr-951 (turn motif), may be needed to be phosphorylated for its full activation. Functionally, pkc-related serine/threonine-protein kinase and Rho/Rac effector protein that participates in specific signal transduction responses in the cell. May play a role in the regulation of cell cycle progression, actin cytoskeleton assembly, cell migration, cell adhesion and transcription activation signaling processes. The polypeptide is Serine/threonine-protein kinase N2 (pkn2) (Danio rerio (Zebrafish)).